The following is a 426-amino-acid chain: Histidine--tRNA ligase (426 aa).

It belongs to the class-II aminoacyl-tRNA synthetase family.

Its subcellular location is the cytoplasm. The enzyme catalyses tRNA(His) + L-histidine + ATP = L-histidyl-tRNA(His) + AMP + diphosphate + H(+). This Thermoplasma volcanium (strain ATCC 51530 / DSM 4299 / JCM 9571 / NBRC 15438 / GSS1) protein is Histidine--tRNA ligase (hisS).